We begin with the raw amino-acid sequence, 685 residues long: Serine/threonine-protein kinase PLK2 (685 aa).

The disordered stretch occupies residues 24 to 71 (KGCGADSKKKRPPQPPEESQPPQSQAQVPPAAAHHHHHHSHSGPEISR). The span at 43 to 55 (QPPQSQAQVPPAA) shows a compositional bias: low complexity. One can recognise a Protein kinase domain in the interval 82 to 334 (YCRGKVLGKG…LDDIIRHDFF (253 aa)). ATP is bound by residues 88 to 96 (LGKGGFAKC) and lysine 111. Aspartate 205 serves as the catalytic Proton acceptor. Phosphothreonine is present on threonine 239. A disordered region spans residues 406–433 (SITQQPSKHRTDEELQPPTTTVARSGTP). POLO box domains follow at residues 503-581 (WVTK…YMEE) and 601-685 (YLLQ…QRCN).

This sequence belongs to the protein kinase superfamily. Ser/Thr protein kinase family. CDC5/Polo subfamily. As to quaternary structure, interacts with NSF; causing NSF dissociation from GRIA2. Interacts with CIB1. Post-translationally, catalytic activity is enhanced by phosphorylation of Thr-239.

The protein localises to the cytoplasm. It localises to the cytoskeleton. It is found in the microtubule organizing center. The protein resides in the centrosome. Its subcellular location is the centriole. The protein localises to the cell projection. It localises to the dendrite. It catalyses the reaction L-seryl-[protein] + ATP = O-phospho-L-seryl-[protein] + ADP + H(+). The catalysed reaction is L-threonyl-[protein] + ATP = O-phospho-L-threonyl-[protein] + ADP + H(+). Activated by phosphorylation of Thr-239. Once activated, activity is stimulated by binding target proteins. Tumor suppressor serine/threonine-protein kinase involved in synaptic plasticity, centriole duplication and G1/S phase transition. Polo-like kinases act by binding and phosphorylating proteins that are already phosphorylated on a specific motif recognized by the POLO box domains. Phosphorylates CPAP, NPM1, RAPGEF2, RASGRF1, SNCA, SIPA1L1 and SYNGAP1. Plays a key role in synaptic plasticity and memory by regulating the Ras and Rap protein signaling: required for overactivity-dependent spine remodeling by phosphorylating the Ras activator RASGRF1 and the Rap inhibitor SIPA1L1 leading to their degradation by the proteasome. Conversely, phosphorylates the Rap activator RAPGEF2 and the Ras inhibitor SYNGAP1, promoting their activity. Also regulates synaptic plasticity independently of kinase activity, via its interaction with NSF that disrupts the interaction between NSF and the GRIA2 subunit of AMPARs, leading to a rapid rundown of AMPAR-mediated current that occludes long term depression. Required for procentriole formation and centriole duplication by phosphorylating CPAP and NPM1, respectively. Its induction by p53/TP53 suggests that it may participate in the mitotic checkpoint following stress. The chain is Serine/threonine-protein kinase PLK2 (PLK2) from Pongo abelii (Sumatran orangutan).